A 346-amino-acid chain; its full sequence is Probable RNA methyltransferase PA1839 (346 aa).

The active-site Proton acceptor is the Glu91. A Radical SAM core domain is found at 94–320; it reads LLPRGGLCVS…TKVRNSAGQD (227 aa). Cys101 and Cys325 form a disulfide bridge. Cys108, Cys112, and Cys115 together coordinate [4Fe-4S] cluster. S-adenosyl-L-methionine is bound by residues 153 to 154, Ser183, 206 to 208, and Asn282; these read GE and SLH. Cys325 functions as the S-methylcysteine intermediate in the catalytic mechanism.

The protein belongs to the radical SAM superfamily. RlmN family. [4Fe-4S] cluster is required as a cofactor.

It is found in the cytoplasm. The sequence is that of Probable RNA methyltransferase PA1839 from Pseudomonas aeruginosa (strain ATCC 15692 / DSM 22644 / CIP 104116 / JCM 14847 / LMG 12228 / 1C / PRS 101 / PAO1).